The primary structure comprises 190 residues: Imidazoleglycerol-phosphate dehydratase (190 aa).

Belongs to the imidazoleglycerol-phosphate dehydratase family.

It is found in the cytoplasm. It carries out the reaction D-erythro-1-(imidazol-4-yl)glycerol 3-phosphate = 3-(imidazol-4-yl)-2-oxopropyl phosphate + H2O. It functions in the pathway amino-acid biosynthesis; L-histidine biosynthesis; L-histidine from 5-phospho-alpha-D-ribose 1-diphosphate: step 6/9. The chain is Imidazoleglycerol-phosphate dehydratase from Methanococcus maripaludis (strain DSM 14266 / JCM 13030 / NBRC 101832 / S2 / LL).